Here is a 628-residue protein sequence, read N- to C-terminus: Neutral/alkaline invertase 1, mitochondrial (628 aa).

Residues 1 to 35 (MAAAAISHLRRGAPRHARALLYLSTRRFSSSSAAG) constitute a mitochondrion transit peptide. The span at 79-90 (ASSAPPLESPPI) shows a compositional bias: low complexity. Residues 79–113 (ASSAPPLESPPIEELPDDATPPPEEEPGLPAPEKD) form a disordered region.

It belongs to the glycosyl hydrolase 100 family. As to expression, expressed in roots, leaf and stems.

The protein localises to the mitochondrion. It carries out the reaction Hydrolysis of terminal non-reducing beta-D-fructofuranoside residues in beta-D-fructofuranosides.. Its function is as follows. Mitochondrial invertase that cleaves sucrose into glucose and fructose. The chain is Neutral/alkaline invertase 1, mitochondrial from Oryza sativa subsp. japonica (Rice).